The following is a 273-amino-acid chain: Proteasome subunit beta type-10 (273 aa).

Position 1 is an N-acetylmethionine (methionine 1). The propeptide at 1-39 (MLKPALEPRGGFSFENCQRNASLERVLPGLKVPHARKTG) is removed in mature form. Threonine 40 serves as the catalytic Nucleophile. The residue at position 230 (serine 230) is a Phosphoserine.

It belongs to the peptidase T1B family. In terms of assembly, the 26S proteasome consists of a 20S proteasome core and two 19S regulatory subunits. The 20S proteasome core is composed of 28 subunits that are arranged in four stacked rings, resulting in a barrel-shaped structure. The two end rings are each formed by seven alpha subunits, and the two central rings are each formed by seven beta subunits. The catalytic chamber with the active sites is on the inside of the barrel. Component of the immunoproteasome, where it displaces the equivalent housekeeping subunit PSMB7. Component of the spermatoproteasome, a form of the proteasome specifically found in testis. As to quaternary structure, (Microbial infection) Interacts with HIV-1 TAT protein. Post-translationally, autocleaved. The resulting N-terminal Thr residue of the mature subunit is responsible for the nucleophile proteolytic activity.

It localises to the cytoplasm. It is found in the nucleus. It catalyses the reaction Cleavage of peptide bonds with very broad specificity.. In terms of biological role, the proteasome is a multicatalytic proteinase complex which is characterized by its ability to cleave peptides with Arg, Phe, Tyr, Leu, and Glu adjacent to the leaving group at neutral or slightly basic pH. The proteasome has an ATP-dependent proteolytic activity. This subunit is involved in antigen processing to generate class I binding peptides. This is Proteasome subunit beta type-10 (PSMB10) from Homo sapiens (Human).